Here is a 521-residue protein sequence, read N- to C-terminus: ATP synthase subunit beta (521 aa).

Composition is skewed to low complexity over residues 1–21 (MAKAATPKTTAAAEAKPAAKA) and 28–42 (PKTTAAAKPAATKSG). Positions 1–42 (MAKAATPKTTAAAEAKPAAKAPAKKAAPKTTAAAKPAATKSG) are disordered. 199 to 206 (GGAGVGKT) serves as a coordination point for ATP.

The protein belongs to the ATPase alpha/beta chains family. In terms of assembly, F-type ATPases have 2 components, CF(1) - the catalytic core - and CF(0) - the membrane proton channel. CF(1) has five subunits: alpha(3), beta(3), gamma(1), delta(1), epsilon(1). CF(0) has three main subunits: a(1), b(2) and c(9-12). The alpha and beta chains form an alternating ring which encloses part of the gamma chain. CF(1) is attached to CF(0) by a central stalk formed by the gamma and epsilon chains, while a peripheral stalk is formed by the delta and b chains.

The protein resides in the cell inner membrane. It catalyses the reaction ATP + H2O + 4 H(+)(in) = ADP + phosphate + 5 H(+)(out). Its function is as follows. Produces ATP from ADP in the presence of a proton gradient across the membrane. The catalytic sites are hosted primarily by the beta subunits. This is ATP synthase subunit beta from Brucella abortus (strain 2308).